A 50-amino-acid chain; its full sequence is Small, acid-soluble spore protein P (50 aa).

The tract at residues 1–50 (MSKRKMGPKQQKNPELPKSPEQPYGEPLSGSKKEKKANHSGQKHNPHHGL) is disordered. The segment covering 33 to 50 (KEKKANHSGQKHNPHHGL) has biased composition (basic residues).

This sequence belongs to the SspP family.

It is found in the spore core. In Oceanobacillus iheyensis (strain DSM 14371 / CIP 107618 / JCM 11309 / KCTC 3954 / HTE831), this protein is Small, acid-soluble spore protein P.